Here is a 256-residue protein sequence, read N- to C-terminus: Ubiquinone biosynthesis O-methyltransferase (256 aa).

S-adenosyl-L-methionine-binding residues include arginine 44, glycine 80, aspartate 101, and methionine 144.

It belongs to the methyltransferase superfamily. UbiG/COQ3 family.

The catalysed reaction is a 3-demethylubiquinol + S-adenosyl-L-methionine = a ubiquinol + S-adenosyl-L-homocysteine + H(+). The enzyme catalyses a 3-(all-trans-polyprenyl)benzene-1,2-diol + S-adenosyl-L-methionine = a 2-methoxy-6-(all-trans-polyprenyl)phenol + S-adenosyl-L-homocysteine + H(+). The protein operates within cofactor biosynthesis; ubiquinone biosynthesis. Functionally, O-methyltransferase that catalyzes the 2 O-methylation steps in the ubiquinone biosynthetic pathway. The polypeptide is Ubiquinone biosynthesis O-methyltransferase (Methylocella silvestris (strain DSM 15510 / CIP 108128 / LMG 27833 / NCIMB 13906 / BL2)).